The following is a 588-amino-acid chain: Vicilin C72 (588 aa).

A signal peptide spans 1–25; it reads MVRNKSACVVLLFSLFLSFGLLCSA. Disordered stretches follow at residues 159 to 183 and 460 to 487; these read RERE…NPFH and PRQS…GQYR. Residues 163–175 show a composition bias toward acidic residues; it reads EEAEEEETEEGEQ. Cupin type-1 domains follow at residues 182-340 and 386-566; these read FHFH…EQLD and FNLL…RLVD. Over residues 465–478 the composition is skewed to acidic residues; it reads FEEEEEQQQEQEQE.

The protein belongs to the 7S seed storage protein family.

Its subcellular location is the vacuole. The protein localises to the aleurone grain. In terms of biological role, seed storage protein. The polypeptide is Vicilin C72 (Gossypium hirsutum (Upland cotton)).